Consider the following 236-residue polypeptide: Bax inhibitor 1 (236 aa).

Over 1–29 (MNIFDRKINFDALFKFSHITPSTQQHLKK) the chain is Cytoplasmic. Residue lysine 7 forms a Glycyl lysine isopeptide (Lys-Gly) (interchain with G-Cter in ubiquitin) linkage. A helical transmembrane segment spans residues 30–50 (VYASFALCMFVAAAGAYIHVV). The Lumenal portion of the chain corresponds to 51-52 (TH). Residues 53–73 (FIQAGLLSALGSLGLMIWLMA) traverse the membrane as a helical segment. At 74 to 86 (TPHSHETEQKRLG) the chain is on the cytoplasmic side. Residues 87 to 107 (LLAGFAFLTGVGLGPALDLCI) traverse the membrane as a helical segment. Topologically, residues 108-112 (AINPS) are lumenal. A helical transmembrane segment spans residues 113–133 (ILPTAFMGTAMIFTCFTLSAL). Over 134-139 (YARRRS) the chain is Cytoplasmic. The helical transmembrane segment at 140–160 (YLFLGGILMSAMSLMLLSSLG) threads the bilayer. Residues 161 to 166 (NLFFGS) lie on the Lumenal side of the membrane. Residues 167–187 (VWLFQANLYMGLVVMCGFVLF) traverse the membrane as a helical segment. The Cytoplasmic portion of the chain corresponds to 188-206 (DTQLIIEKAENGDKDYIWH). Positions 207–227 (CVDLFLDFVTLFRKLMMILAM) form an intramembrane region, helical. Residues 228–236 (NEKDKKKKK) are Cytoplasmic-facing.

This sequence belongs to the BI1 family. Interacts with BCL2 and BCL2L1. Interacts with ERN1. In terms of processing, ubiquitinated by BFAR, leading to proteasomal degradation.

The protein resides in the endoplasmic reticulum membrane. Its function is as follows. Endoplasmic reticulum (ER)-resident protein that confers cellular protection as an anti-apoptotic protein by limiting multiple stress-inducing pathways surrounding the endoplasmic reticulum and mitochondria. Inhibits the activities of the key sensor for the endoplasmic reticulum unfolded protein response IRE1alpha/ERN1 both directly and by blocking BAX/BAK binding. Modulates ER calcium homeostasis by acting as a calcium-leak channel. Negatively regulates autophagy and autophagosome formation, especially during periods of nutrient deprivation, and reduces cell survival during starvation. The sequence is that of Bax inhibitor 1 (TMBIM6) from Bos taurus (Bovine).